The sequence spans 408 residues: Imidazolonepropionase (408 aa).

Fe(3+) contacts are provided by histidine 73 and histidine 75. Zn(2+) is bound by residues histidine 73 and histidine 75. Positions 82, 145, and 178 each coordinate 4-imidazolone-5-propanoate. Tyrosine 145 lines the N-formimidoyl-L-glutamate pocket. Histidine 243 provides a ligand contact to Fe(3+). Histidine 243 serves as a coordination point for Zn(2+). Glutamine 246 is a binding site for 4-imidazolone-5-propanoate. Aspartate 318 contributes to the Fe(3+) binding site. Zn(2+) is bound at residue aspartate 318. N-formimidoyl-L-glutamate is bound by residues asparagine 320 and glycine 322. Serine 323 contributes to the 4-imidazolone-5-propanoate binding site.

This sequence belongs to the metallo-dependent hydrolases superfamily. HutI family. The cofactor is Zn(2+). Fe(3+) is required as a cofactor.

Its subcellular location is the cytoplasm. It carries out the reaction 4-imidazolone-5-propanoate + H2O = N-formimidoyl-L-glutamate. It functions in the pathway amino-acid degradation; L-histidine degradation into L-glutamate; N-formimidoyl-L-glutamate from L-histidine: step 3/3. Functionally, catalyzes the hydrolytic cleavage of the carbon-nitrogen bond in imidazolone-5-propanoate to yield N-formimidoyl-L-glutamate. It is the third step in the universal histidine degradation pathway. In Shewanella sp. (strain ANA-3), this protein is Imidazolonepropionase.